We begin with the raw amino-acid sequence, 469 residues long: Arginine biosynthesis bifunctional protein ArgJ, chloroplastic (469 aa).

Positions 213, 239, 250, 337, 464, and 469 each coordinate substrate. The active-site Nucleophile is T250.

This sequence belongs to the ArgJ family. Heterodimer of an alpha and a beta chain.

The protein resides in the plastid. The protein localises to the chloroplast. The enzyme catalyses N(2)-acetyl-L-ornithine + L-glutamate = N-acetyl-L-glutamate + L-ornithine. It catalyses the reaction L-glutamate + acetyl-CoA = N-acetyl-L-glutamate + CoA + H(+). It participates in amino-acid biosynthesis; L-arginine biosynthesis; L-ornithine and N-acetyl-L-glutamate from L-glutamate and N(2)-acetyl-L-ornithine (cyclic): step 1/1. It functions in the pathway amino-acid biosynthesis; L-arginine biosynthesis; N(2)-acetyl-L-ornithine from L-glutamate: step 1/4. Catalyzes two activities which are involved in the cyclic version of arginine biosynthesis: the synthesis of acetylglutamate from glutamate and acetyl-CoA, and of ornithine by transacetylation between acetylornithine and glutamate. The chain is Arginine biosynthesis bifunctional protein ArgJ, chloroplastic from Ricinus communis (Castor bean).